A 173-amino-acid polypeptide reads, in one-letter code: Peptidyl-prolyl cis-trans isomerase 3 (173 aa).

The 164-residue stretch at 7–170 (FFDITIGGKA…KDCMIADCGQ (164 aa)) folds into the PPIase cyclophilin-type domain.

Belongs to the cyclophilin-type PPIase family. Exclusively expressed in the single anterior excretory cell.

The enzyme catalyses [protein]-peptidylproline (omega=180) = [protein]-peptidylproline (omega=0). Functionally, catalyzes the cis-trans isomerization of proline imidic peptide bonds in oligopeptides. Plays a role in protein folding, transport and assembly. The sequence is that of Peptidyl-prolyl cis-trans isomerase 3 (cyn-3) from Caenorhabditis elegans.